We begin with the raw amino-acid sequence, 727 residues long: Cadmium-transporting ATPase (727 aa).

The region spanning 12–75 (EMNVYRVQGF…AGAFENLKVS (64 aa)) is the HMA domain. The Cd(2+) site is built by cysteine 23 and cysteine 26. 5 helical membrane passes run 106 to 126 (STLL…FVNG), 130 to 150 (LVTS…LFKV), 171 to 191 (IGAT…LFAI), 336 to 356 (IIMV…GGSW), and 364 to 384 (LAVL…ISIV). The active-site 4-aspartylphosphate intermediate is the aspartate 415. Helical transmembrane passes span 672-694 (LNII…LLVI) and 699-721 (TLWI…SLRL).

Belongs to the cation transport ATPase (P-type) (TC 3.A.3) family. Type IB subfamily.

The protein localises to the cell membrane. The catalysed reaction is Cd(2+)(in) + ATP + H2O = Cd(2+)(out) + ADP + phosphate + H(+). With respect to regulation, inhibited by the antibiotic bafilomycin A1. Partially inhibited by DCCD, nigericin and FCCP. In terms of biological role, couples the hydrolysis of ATP with the export of cadmium. Involved in cadmium resistance. The sequence is that of Cadmium-transporting ATPase from Staphylococcus aureus.